We begin with the raw amino-acid sequence, 524 residues long: Na(+)/H(+) antiporter NhaB (524 aa).

12 consecutive transmembrane segments (helical) span residues 23-43, 44-64, 97-117, 120-140, 144-164, 203-223, 236-256, 304-324, 354-374, 392-412, 448-468, and 476-496; these read IAIL…PFYA, GWLL…CYPL, LLLI…LFVF, LLLN…AAAF, FLDA…FYGI, LLMH…VGEP, FVSF…CGIL, ALVG…VGLI, FTAL…QHLF, LFYL…VGTV, ATPN…APLI, and VWMA…CVIF.

This sequence belongs to the NhaB Na(+)/H(+) (TC 2.A.34) antiporter family.

Its subcellular location is the cell inner membrane. The catalysed reaction is 2 Na(+)(in) + 3 H(+)(out) = 2 Na(+)(out) + 3 H(+)(in). Functionally, na(+)/H(+) antiporter that extrudes sodium in exchange for external protons. This is Na(+)/H(+) antiporter NhaB from Edwardsiella ictaluri (strain 93-146).